The following is a 264-amino-acid chain: Thymidylate synthase (264 aa).

R21 provides a ligand contact to dUMP. H51 contacts (6R)-5,10-methylene-5,6,7,8-tetrahydrofolate. 126 to 127 lines the dUMP pocket; it reads RR. C146 serves as the catalytic Nucleophile. DUMP contacts are provided by residues 166–169, N177, and 207–209; these read RSAD and HLY. D169 is a binding site for (6R)-5,10-methylene-5,6,7,8-tetrahydrofolate. Position 263 (A263) interacts with (6R)-5,10-methylene-5,6,7,8-tetrahydrofolate.

It belongs to the thymidylate synthase family. Bacterial-type ThyA subfamily. In terms of assembly, homodimer.

It localises to the cytoplasm. The catalysed reaction is dUMP + (6R)-5,10-methylene-5,6,7,8-tetrahydrofolate = 7,8-dihydrofolate + dTMP. It functions in the pathway pyrimidine metabolism; dTTP biosynthesis. In terms of biological role, catalyzes the reductive methylation of 2'-deoxyuridine-5'-monophosphate (dUMP) to 2'-deoxythymidine-5'-monophosphate (dTMP) while utilizing 5,10-methylenetetrahydrofolate (mTHF) as the methyl donor and reductant in the reaction, yielding dihydrofolate (DHF) as a by-product. This enzymatic reaction provides an intracellular de novo source of dTMP, an essential precursor for DNA biosynthesis. The chain is Thymidylate synthase from Rhizobium johnstonii (strain DSM 114642 / LMG 32736 / 3841) (Rhizobium leguminosarum bv. viciae).